The sequence spans 168 residues: Phosphopantetheine adenylyltransferase (168 aa).

Ser-9 contributes to the substrate binding site. Residues 9 to 10 (SF) and His-17 contribute to the ATP site. Positions 41, 73, and 87 each coordinate substrate. Residues 88–90 (GMR), Glu-98, and 123–129 (WIYTSSS) contribute to the ATP site.

The protein belongs to the bacterial CoaD family. As to quaternary structure, homohexamer. Requires Mg(2+) as cofactor.

It is found in the cytoplasm. The enzyme catalyses (R)-4'-phosphopantetheine + ATP + H(+) = 3'-dephospho-CoA + diphosphate. Its pathway is cofactor biosynthesis; coenzyme A biosynthesis; CoA from (R)-pantothenate: step 4/5. Its function is as follows. Reversibly transfers an adenylyl group from ATP to 4'-phosphopantetheine, yielding dephospho-CoA (dPCoA) and pyrophosphate. In Desulfosudis oleivorans (strain DSM 6200 / JCM 39069 / Hxd3) (Desulfococcus oleovorans), this protein is Phosphopantetheine adenylyltransferase.